A 93-amino-acid chain; its full sequence is Small ribosomal subunit protein uS19 (93 aa).

Belongs to the universal ribosomal protein uS19 family.

Functionally, protein S19 forms a complex with S13 that binds strongly to the 16S ribosomal RNA. The polypeptide is Small ribosomal subunit protein uS19 (Mycolicibacterium paratuberculosis (strain ATCC BAA-968 / K-10) (Mycobacterium paratuberculosis)).